The sequence spans 440 residues: Xylose isomerase (440 aa).

Positions 307 and 309 each coordinate Mg(2+).

The protein belongs to the xylose isomerase family. In terms of assembly, homotetramer. Requires Mg(2+) as cofactor.

The protein resides in the cytoplasm. It carries out the reaction alpha-D-xylose = alpha-D-xylulofuranose. The polypeptide is Xylose isomerase (Escherichia coli (strain K12 / MC4100 / BW2952)).